The chain runs to 281 residues: Shikimate dehydrogenase (NADP(+)) (281 aa).

Shikimate is bound by residues 15–17 (SKS) and T62. K66 serves as the catalytic Proton acceptor. Residues N87 and D102 each contribute to the shikimate site. Residues 127–131 (GAGGS), 151–156 (NRTPER), and L217 contribute to the NADP(+) site. Y219 serves as a coordination point for shikimate. G241 contributes to the NADP(+) binding site.

This sequence belongs to the shikimate dehydrogenase family. As to quaternary structure, homodimer.

The catalysed reaction is shikimate + NADP(+) = 3-dehydroshikimate + NADPH + H(+). It functions in the pathway metabolic intermediate biosynthesis; chorismate biosynthesis; chorismate from D-erythrose 4-phosphate and phosphoenolpyruvate: step 4/7. Its function is as follows. Involved in the biosynthesis of the chorismate, which leads to the biosynthesis of aromatic amino acids. Catalyzes the reversible NADPH linked reduction of 3-dehydroshikimate (DHSA) to yield shikimate (SA). This is Shikimate dehydrogenase (NADP(+)) from Stenotrophomonas maltophilia (strain R551-3).